A 115-amino-acid chain; its full sequence is NADH-ubiquinone oxidoreductase chain 3 (115 aa).

3 consecutive transmembrane segments (helical) span residues 3 to 23, 55 to 75, and 84 to 104; these read FALI…ITFW, FFLV…LLPL, and LPLM…SLAY.

Belongs to the complex I subunit 3 family. As to quaternary structure, core subunit of respiratory chain NADH dehydrogenase (Complex I) which is composed of 45 different subunits. Interacts with TMEM186. Interacts with TMEM242.

The protein localises to the mitochondrion inner membrane. The enzyme catalyses a ubiquinone + NADH + 5 H(+)(in) = a ubiquinol + NAD(+) + 4 H(+)(out). Functionally, core subunit of the mitochondrial membrane respiratory chain NADH dehydrogenase (Complex I) which catalyzes electron transfer from NADH through the respiratory chain, using ubiquinone as an electron acceptor. Essential for the catalytic activity of complex I. The chain is NADH-ubiquinone oxidoreductase chain 3 from Gorilla gorilla gorilla (Western lowland gorilla).